The chain runs to 310 residues: Malate dehydrogenase (310 aa).

Residues 7–12 (GAGNVG) and Asp32 each bind NAD(+). Arg81 and Arg87 together coordinate substrate. NAD(+) contacts are provided by residues Asn94 and 117–119 (VSN). Substrate-binding residues include Asn119 and Arg150. The Proton acceptor role is filled by His174.

The protein belongs to the LDH/MDH superfamily. MDH type 3 family.

The catalysed reaction is (S)-malate + NAD(+) = oxaloacetate + NADH + H(+). Catalyzes the reversible oxidation of malate to oxaloacetate. In Chlorobium phaeobacteroides (strain DSM 266 / SMG 266 / 2430), this protein is Malate dehydrogenase.